The primary structure comprises 340 residues: Probable tRNA pseudouridine synthase B (340 aa).

Aspartate 82 acts as the Nucleophile in catalysis. The PUA domain occupies 250 to 325 (LPKVWIKDSA…IAVDVEKVFM (76 aa)).

Belongs to the pseudouridine synthase TruB family. Type 2 subfamily.

It carries out the reaction uridine(55) in tRNA = pseudouridine(55) in tRNA. Functionally, could be responsible for synthesis of pseudouridine from uracil-55 in the psi GC loop of transfer RNAs. This chain is Probable tRNA pseudouridine synthase B, found in Pyrococcus furiosus (strain ATCC 43587 / DSM 3638 / JCM 8422 / Vc1).